The following is a 548-amino-acid chain: DNA ligase (548 aa).

E252 is a binding site for ATP. The N6-AMP-lysine intermediate role is filled by K254. The ATP site is built by R259, R274, E303, F343, R414, and K420.

The protein belongs to the ATP-dependent DNA ligase family. The cofactor is Mg(2+).

The enzyme catalyses ATP + (deoxyribonucleotide)n-3'-hydroxyl + 5'-phospho-(deoxyribonucleotide)m = (deoxyribonucleotide)n+m + AMP + diphosphate.. Functionally, DNA ligase that seals nicks in double-stranded DNA during DNA replication, DNA recombination and DNA repair. The protein is DNA ligase of Natronomonas pharaonis (strain ATCC 35678 / DSM 2160 / CIP 103997 / JCM 8858 / NBRC 14720 / NCIMB 2260 / Gabara) (Halobacterium pharaonis).